The following is a 273-amino-acid chain: 4-hydroxy-tetrahydrodipicolinate reductase (273 aa).

NAD(+) contacts are provided by residues 12 to 17 (GAGGRM) and Glu38. Residue Arg39 coordinates NADP(+). Residues 102–104 (GTT) and 126–129 (AANF) each bind NAD(+). Catalysis depends on His159, which acts as the Proton donor/acceptor. His160 is a (S)-2,3,4,5-tetrahydrodipicolinate binding site. The Proton donor role is filled by Lys163. (S)-2,3,4,5-tetrahydrodipicolinate is bound at residue 169-170 (GT).

Belongs to the DapB family. Homotetramer.

The protein localises to the cytoplasm. The catalysed reaction is (S)-2,3,4,5-tetrahydrodipicolinate + NAD(+) + H2O = (2S,4S)-4-hydroxy-2,3,4,5-tetrahydrodipicolinate + NADH + H(+). The enzyme catalyses (S)-2,3,4,5-tetrahydrodipicolinate + NADP(+) + H2O = (2S,4S)-4-hydroxy-2,3,4,5-tetrahydrodipicolinate + NADPH + H(+). The protein operates within amino-acid biosynthesis; L-lysine biosynthesis via DAP pathway; (S)-tetrahydrodipicolinate from L-aspartate: step 4/4. Functionally, catalyzes the conversion of 4-hydroxy-tetrahydrodipicolinate (HTPA) to tetrahydrodipicolinate. The protein is 4-hydroxy-tetrahydrodipicolinate reductase of Salmonella dublin (strain CT_02021853).